We begin with the raw amino-acid sequence, 223 residues long: Ribose-5-phosphate isomerase A (223 aa).

Substrate contacts are provided by residues 28-31 (TGST), 81-84 (DGTD), and 94-97 (KGGG). Glu-103 serves as the catalytic Proton acceptor. Lys-121 is a substrate binding site.

The protein belongs to the ribose 5-phosphate isomerase family. Homodimer.

It catalyses the reaction aldehydo-D-ribose 5-phosphate = D-ribulose 5-phosphate. The protein operates within carbohydrate degradation; pentose phosphate pathway; D-ribose 5-phosphate from D-ribulose 5-phosphate (non-oxidative stage): step 1/1. Catalyzes the reversible conversion of ribose-5-phosphate to ribulose 5-phosphate. This chain is Ribose-5-phosphate isomerase A, found in Baumannia cicadellinicola subsp. Homalodisca coagulata.